We begin with the raw amino-acid sequence, 361 residues long: UDP-3-O-acylglucosamine N-acyltransferase (361 aa).

The active-site Proton acceptor is the H253.

The protein belongs to the transferase hexapeptide repeat family. LpxD subfamily. Homotrimer.

The enzyme catalyses a UDP-3-O-[(3R)-3-hydroxyacyl]-alpha-D-glucosamine + a (3R)-hydroxyacyl-[ACP] = a UDP-2-N,3-O-bis[(3R)-3-hydroxyacyl]-alpha-D-glucosamine + holo-[ACP] + H(+). Its pathway is bacterial outer membrane biogenesis; LPS lipid A biosynthesis. Functionally, catalyzes the N-acylation of UDP-3-O-acylglucosamine using 3-hydroxyacyl-ACP as the acyl donor. Is involved in the biosynthesis of lipid A, a phosphorylated glycolipid that anchors the lipopolysaccharide to the outer membrane of the cell. This Burkholderia thailandensis (strain ATCC 700388 / DSM 13276 / CCUG 48851 / CIP 106301 / E264) protein is UDP-3-O-acylglucosamine N-acyltransferase.